The sequence spans 282 residues: Glutamate--LysW ligase ArgX (282 aa).

Residues lysine 87, lysine 127, 131 to 137 (GSWGRLV), and 167 to 178 (QEYIQYKGRDIR) contribute to the ATP site. Residues 91–277 (YSKLYREGIP…VAQKLVEYIK (187 aa)) form the ATP-grasp domain. Residue arginine 192 coordinates substrate. Position 202 (asparagine 202) interacts with ATP. 203–204 (VA) is a substrate binding site. Mg(2+)-binding residues include aspartate 237, glutamate 250, and asparagine 252. Substrate is bound at residue 256–260 (EFKGF). The short motif at 259–260 (GF) is the GF motif that is essential for ArgX substrate specificity element.

This sequence belongs to the RimK family. LysX subfamily. In terms of assembly, homotetramer. Interacts with LysW. Mg(2+) serves as cofactor.

The catalysed reaction is [amino-group carrier protein]-C-terminal-L-glutamate + L-glutamate + ATP = [amino-group carrier protein]-C-terminal-gamma-(L-glutamyl)-L-glutamate + ADP + phosphate + H(+). It functions in the pathway amino-acid biosynthesis; L-arginine biosynthesis. Catalyzes the ATP-dependent formation of a covalent bond between the amino group of glutamate and the gamma-carboxyl group of the C-terminal glutamate residue in LysW. The chain is Glutamate--LysW ligase ArgX from Sulfurisphaera tokodaii (strain DSM 16993 / JCM 10545 / NBRC 100140 / 7) (Sulfolobus tokodaii).